The following is a 185-amino-acid chain: Intraflagellar transport protein 22 homolog (185 aa).

GTP contacts are provided by residues 10 to 17, 63 to 67, and 123 to 126; these read GPCESGKT, DCGGD, and HKPG.

The protein belongs to the small GTPase superfamily. Rab family. Component of the IFT complex B, at least composed of IFT20, IFT22, IFT25, IFT27, IFT46, IFT52, TRAF3IP1/IFT54, IFT57, IFT74, IFT80, IFT81, and IFT88. Interacts with IFT88. Interacts with CFAP61.

It localises to the cell projection. The protein localises to the cilium. Small GTPase-like component of the intraflagellar transport (IFT) complex B. The protein is Intraflagellar transport protein 22 homolog (IFT22) of Bos taurus (Bovine).